A 204-amino-acid polypeptide reads, in one-letter code: Adenylyl-sulfate kinase (204 aa).

An ATP-binding site is contributed by 34 to 41; that stretch reads GLSGSGKS. Serine 108 serves as the catalytic Phosphoserine intermediate.

Belongs to the APS kinase family.

The enzyme catalyses adenosine 5'-phosphosulfate + ATP = 3'-phosphoadenylyl sulfate + ADP + H(+). Its pathway is sulfur metabolism; hydrogen sulfide biosynthesis; sulfite from sulfate: step 2/3. Functionally, catalyzes the synthesis of activated sulfate. This is Adenylyl-sulfate kinase from Phocaeicola vulgatus (strain ATCC 8482 / DSM 1447 / JCM 5826 / CCUG 4940 / NBRC 14291 / NCTC 11154) (Bacteroides vulgatus).